Reading from the N-terminus, the 62-residue chain is MAKKAKGNRVQVILECTEHKESGMPGTSRYITTKNRKNTTERLELKKYNPILKRVTVHKEIK.

This sequence belongs to the bacterial ribosomal protein bL33 family.

This chain is Large ribosomal subunit protein bL33, found in Bacteroides thetaiotaomicron (strain ATCC 29148 / DSM 2079 / JCM 5827 / CCUG 10774 / NCTC 10582 / VPI-5482 / E50).